Consider the following 481-residue polypeptide: DNA gyrase subunit B (481 aa).

Residues 323 to 442 (CELYLVEGDS…QGYVYIAQPP (120 aa)) enclose the Toprim domain. Mg(2+) is bound by residues Glu329, Asp407, and Asp409.

Belongs to the type II topoisomerase GyrB family. As to quaternary structure, heterotetramer, composed of two GyrA and two GyrB chains. In the heterotetramer, GyrA contains the active site tyrosine that forms a transient covalent intermediate with DNA, while GyrB binds cofactors and catalyzes ATP hydrolysis. Mg(2+) is required as a cofactor. Requires Mn(2+) as cofactor. It depends on Ca(2+) as a cofactor.

It is found in the cytoplasm. The enzyme catalyses ATP-dependent breakage, passage and rejoining of double-stranded DNA.. In terms of biological role, a type II topoisomerase that negatively supercoils closed circular double-stranded (ds) DNA in an ATP-dependent manner to modulate DNA topology and maintain chromosomes in an underwound state. Negative supercoiling favors strand separation, and DNA replication, transcription, recombination and repair, all of which involve strand separation. Also able to catalyze the interconversion of other topological isomers of dsDNA rings, including catenanes and knotted rings. Type II topoisomerases break and join 2 DNA strands simultaneously in an ATP-dependent manner. The protein is DNA gyrase subunit B (gyrB) of Chitinophaga japonensis (Flexibacter japonensis).